The sequence spans 138 residues: Small ribosomal subunit protein uS12 (138 aa).

Positions 1–20 are disordered; sequence MPTISQLINHGRSAKTSKSK. D102 is subject to 3-methylthioaspartic acid. A disordered region spans residues 116–138; that stretch reads DAAGVDKRKQGRSIYGTKKPKEN.

This sequence belongs to the universal ribosomal protein uS12 family. Part of the 30S ribosomal subunit. Contacts proteins S8 and S17. May interact with IF1 in the 30S initiation complex.

With S4 and S5 plays an important role in translational accuracy. Functionally, interacts with and stabilizes bases of the 16S rRNA that are involved in tRNA selection in the A site and with the mRNA backbone. Located at the interface of the 30S and 50S subunits, it traverses the body of the 30S subunit contacting proteins on the other side and probably holding the rRNA structure together. The combined cluster of proteins S8, S12 and S17 appears to hold together the shoulder and platform of the 30S subunit. This is Small ribosomal subunit protein uS12 from Metamycoplasma arthritidis (strain 158L3-1) (Mycoplasma arthritidis).